A 758-amino-acid polypeptide reads, in one-letter code: Vitamin K-dependent gamma-carboxylase (758 aa).

Residues 1-21 (MAVSARSARTSPGSDKVQKDK) are disordered. The residue at position 2 (Ala2) is an N-acetylalanine. Over 2 to 60 (AVSARSARTSPGSDKVQKDKAELISGPRQDSLMGKLLGFEWTDLSSWRRLVTLLNRPTD) the chain is Cytoplasmic. Residues 61 to 81 (PASLAVFRFLFGFLMVLDIPQ) form a helical membrane-spanning segment. Residues 82-113 (ERGLSSLDRKYLDGLDVCRFPLLDALRPLPLD) are Lumenal-facing. Residues Cys99 and Cys450 are joined by a disulfide bond. Residues 114 to 134 (WMYLVYTIMFLGALGMMLGLC) traverse the membrane as a helical segment. Residues 135–136 (YR) lie on the Cytoplasmic side of the membrane. The chain crosses the membrane as a helical span at residues 137–157 (ISCVLFLLPYWYVFLLDKTSW). At 158-292 (NNHSYLYGLL…VSYFHCMNSQ (135 aa)) the chain is on the lumenal side. The helical transmembrane segment at 293–313 (LFSIGMFSYVMLASSPLFCSP) threads the bilayer. At 314–361 (EWPRKLVSYCPQRLQELLPLKAAPQPSVSCVYKRSRGKSGQKPGLRHQ) the chain is on the cytoplasmic side. Residues 362 to 382 (LGAAFTLLYLLEQLFLPYSHF) form a helical membrane-spanning segment. The Lumenal portion of the chain corresponds to 383–758 (LTQGYNNWTN…SNPDPVHSEF (376 aa)). Residues 732–758 (GELSPSNMDSSHSNPPESNPDPVHSEF) form a disordered region. A compositionally biased stretch (polar residues) spans 735–747 (SPSNMDSSHSNPP).

It belongs to the vitamin K-dependent gamma-carboxylase family. Monomer. May interact with CALU.

The protein localises to the endoplasmic reticulum membrane. It carries out the reaction 4-carboxy-L-glutamyl-[protein] + 2,3-epoxyphylloquinone + H2O + H(+) = phylloquinol + L-glutamyl-[protein] + CO2 + O2. Mediates the vitamin K-dependent carboxylation of glutamate residues to calcium-binding gamma-carboxyglutamate (Gla) residues with the concomitant conversion of the reduced hydroquinone form of vitamin K to vitamin K epoxide. Catalyzes gamma-carboxylation of various proteins, such as blood coagulation factors (F2, F7, F9 and F10), osteocalcin (BGLAP) or matrix Gla protein (MGP). This chain is Vitamin K-dependent gamma-carboxylase (GGCX), found in Pongo abelii (Sumatran orangutan).